A 435-amino-acid chain; its full sequence is UPF0053 protein Rv2366c (435 aa).

The region spanning 1–185 is the CNNM transmembrane domain; that stretch reads MTGYYQLLGS…QQRGVVAADE (185 aa). A run of 2 helical transmembrane segments spans residues 7 to 27 and 89 to 109; these read LLGS…DAAI and VWGL…VVGV. CBS domains lie at 204–267 and 272–329; these read MVPR…GRET and VMRP…IADE.

The protein belongs to the UPF0053 family.

It localises to the cell membrane. In Mycobacterium tuberculosis (strain ATCC 25618 / H37Rv), this protein is UPF0053 protein Rv2366c.